Reading from the N-terminus, the 412-residue chain is Putative competence-damage inducible protein (412 aa).

It belongs to the CinA family.

The chain is Putative competence-damage inducible protein from Bacillus anthracis.